Consider the following 183-residue polypeptide: Gamma-crystallin N-B (183 aa).

4 Beta/gamma crystallin 'Greek key' domains span residues 6–46, 47–89, 95–136, and 138–180; these read GKIC…RVES, GAWI…RPIR, YRME…RVFG, and GAWV…RRIV.

Belongs to the beta/gamma-crystallin family. Monomer.

Functionally, crystallins are the dominant structural components of the vertebrate eye lens. The chain is Gamma-crystallin N-B (crygnb) from Danio rerio (Zebrafish).